Reading from the N-terminus, the 159-residue chain is U1 small nuclear ribonucleoprotein C (159 aa).

The Matrin-type zinc finger occupies 4 to 36 (FYCDYCDTYLTHDSPSVRKTHCSGRKHKENVKD). 2 disordered regions span residues 63 to 95 (PPTP…MPAP) and 139 to 159 (MRPP…RPDR). The span at 77–95 (IPPPPSMGGPPRPGMMPAP) shows a compositional bias: pro residues.

It belongs to the U1 small nuclear ribonucleoprotein C family. Component of the U1 snRNP. The U1 snRNP is composed of the U1 snRNA and the 7 core Sm proteins snrpb, snrpd1, snrpd2, snrpd3, snrpe, snrpf and snrpg that assemble in a heptameric protein ring on the Sm site of the small nuclear RNA to form the core snRNP, and at least 3 U1 snRNP-specific proteins snrnp70/U1-70K, snrpa/U1-A and snrpc/U1-C. snrpc/U1-C interacts with U1 snRNA and the 5' splice-site region of the pre-mRNA.

The protein resides in the nucleus. Component of the spliceosomal U1 snRNP, which is essential for recognition of the pre-mRNA 5' splice-site and the subsequent assembly of the spliceosome. snrpc/U1-C is directly involved in initial 5' splice-site recognition for both constitutive and regulated alternative splicing. The interaction with the 5' splice-site seems to precede base-pairing between the pre-mRNA and the U1 snRNA. Stimulates commitment or early (E) complex formation by stabilizing the base pairing of the 5' end of the U1 snRNA and the 5' splice-site region. The chain is U1 small nuclear ribonucleoprotein C from Xenopus tropicalis (Western clawed frog).